The sequence spans 1088 residues: Protocadherin-19 (1088 aa).

An N-terminal signal peptide occupies residues 1–24 (MHSKDMDFVQMFVCFLLCWTGVDA). The Extracellular segment spans residues 25 to 678 (VFNLKYTVEE…QEQIGPVNLS (654 aa)). Cadherin domains follow at residues 31–130 (TVEE…APRF), 131–239 (PTNH…NPVF), 240–347 (DEPV…APEI), 351–454 (SENS…PPYF), 455–563 (TKPH…TPVM), and 569–676 (VNGT…GPVN). Residues glutamate 34 and glutamate 35 each coordinate Ca(2+). Asparagine 44 carries an N-linked (GlcNAc...) asparagine glycan. Ca(2+)-binding residues include aspartate 89 and aspartate 91. A disulfide bond links cysteine 94 and cysteine 100. Ca(2+) contacts are provided by aspartate 122, valine 123, asparagine 124, aspartate 125, asparagine 126, glutamate 141, aspartate 156, aspartate 158, asparagine 162, glutamate 200, aspartate 213, aspartate 231, serine 232, asparagine 233, aspartate 234, asparagine 235, and glutamate 250. Asparagine 262 carries N-linked (GlcNAc...) asparagine glycosylation. Positions 265, 267, and 271 each coordinate Ca(2+). Asparagine 284 carries an N-linked (GlcNAc...) asparagine glycan. Residues aspartate 306, glutamate 308, aspartate 339, isoleucine 340, asparagine 341, aspartate 342, asparagine 343, glutamate 361, and aspartate 376 each coordinate Ca(2+). An N-linked (GlcNAc...) asparagine glycan is attached at asparagine 377. Aspartate 378, asparagine 382, aspartate 413, and glutamate 415 together coordinate Ca(2+). The N-linked (GlcNAc...) asparagine glycan is linked to asparagine 421. Positions 428, 446, 447, 448, 449, 450, 465, 480, 482, 486, 522, 524, and 537 each coordinate Ca(2+). The N-linked (GlcNAc...) asparagine glycan is linked to asparagine 486. Asparagine 546 is a glycosylation site (N-linked (GlcNAc...) asparagine). The Ca(2+) site is built by aspartate 555, valine 556, asparagine 557, aspartate 558, and asparagine 559. N-linked (GlcNAc...) asparagine glycosylation is present at asparagine 570. Positions 594, 596, 600, and 646 each coordinate Ca(2+). The N-linked (GlcNAc...) asparagine glycan is linked to asparagine 676. Residues 679–699 (LIFIIALGSIAVILFVTMIFV) form a helical membrane-spanning segment. At 700–1088 (AVKCKRDNKE…GSKRLKDIVL (389 aa)) the chain is on the cytoplasmic side. Disordered regions lie at residues 792 to 813 (NSRN…GPQQ), 851 to 875 (DMEG…HDVQ), 970 to 1032 (TFGK…ASST), and 1067 to 1088 (TLLQ…DIVL). A compositionally biased stretch (basic and acidic residues) spans 859–875 (DSGHEESDQTDSEHDVQ). The span at 1071–1088 (DGRDKESPGSKRLKDIVL) shows a compositional bias: basic and acidic residues.

Homodimer; antiparallel. Interacts with cadherin cdh2; the interaction confers robust cell adhesion activity on pcdh19. In terms of tissue distribution, in the embryo, strongly expressed in the developing nervous system. At 12 hours post fertilization (hpf), shows a segmental expression pattern in the anterior third of the neural keel with strong expression in the presumptive forebrain, cerebellum/rhombomere 1 and rhombomere 4. By 24 hpf, expressed widely in the brain and spinal cord with higher expression levels in the ventral telencephalon, dorsal and central thalamus, optic tectum, central tegmentum, cerebellum and dorsolateral regions of the hindbrain. As development proceeds, expression becomes restricted to the dorsal and/or lateral regions of the central nervous system. Not detected in the spinal cord of two- and three-day old embryos. Expressed in the eye primordium, developing retina, lens and otic vesicle. Expressed in the larval optic tectum at 4 days post-fertilization where it localizes in discrete columns of neurons. Expressed throughout the adult brain with strong expression in the ventromedial telencephalon, periventricular regions of the thalamus and anterior hypothalamus, stratum periventriculare of the optic tectum, dorsal tegmental nucleus, granular regions of the cerebellar body and valvula, and superficial layers of the facial and vagal lobes.

The protein localises to the cell membrane. Calcium-dependent cell-adhesion protein. Essential for the early stages of neurulation in the anterior neural plate. Shows little cell adhesion activity on its own but exhibits robust homophilic cell adhesion when in a complex with cadherin cdh2 and appears to mediate the adhesion while cdh2 acts as a cell adhesion cofactor in the complex. Functions with cdh2 to coordinate cell adhesion and cell movements during neurulation. Contributes to neural progenitor cell patterning with cdh2 by promoting homophilic cell interactions. Regulates the columnar organization of neurons in the optic tectum. The protein is Protocadherin-19 of Danio rerio (Zebrafish).